A 1658-amino-acid polypeptide reads, in one-letter code: Protein TIC 214 (1658 aa).

Transmembrane regions (helical) follow at residues 28–48, 52–72, 82–102, 130–150, 165–185, and 199–219; these read FGLY…ILTI, LLGG…GQLI, IYVM…YMLF, IFLD…SPVF, ISFV…FINL, and VNYP…ILAL.

Belongs to the TIC214 family. As to quaternary structure, part of the Tic complex.

The protein localises to the plastid. The protein resides in the chloroplast inner membrane. In terms of biological role, involved in protein precursor import into chloroplasts. May be part of an intermediate translocation complex acting as a protein-conducting channel at the inner envelope. The sequence is that of Protein TIC 214 from Huperzia lucidula (Shining clubmoss).